A 467-amino-acid polypeptide reads, in one-letter code: Glutamate--tRNA ligase (467 aa).

Positions 14-24 (PSPTGFLHLGG) match the 'HIGH' region motif. Positions 124-134 (PRYDGTWRPEP) are enriched in basic and acidic residues. Residues 124 to 156 (PRYDGTWRPEPGKTLPPVPAGRKPVVRFKNPQD) form a disordered region. The 'KMSKS' region motif lies at 246–250 (KLSKR). ATP is bound at residue K249.

The protein belongs to the class-I aminoacyl-tRNA synthetase family. Glutamate--tRNA ligase type 1 subfamily. In terms of assembly, monomer.

Its subcellular location is the cytoplasm. It carries out the reaction tRNA(Glu) + L-glutamate + ATP = L-glutamyl-tRNA(Glu) + AMP + diphosphate. Its function is as follows. Catalyzes the attachment of glutamate to tRNA(Glu) in a two-step reaction: glutamate is first activated by ATP to form Glu-AMP and then transferred to the acceptor end of tRNA(Glu). The polypeptide is Glutamate--tRNA ligase (Bordetella petrii (strain ATCC BAA-461 / DSM 12804 / CCUG 43448)).